The chain runs to 127 residues: Aspartate 1-decarboxylase (127 aa).

S25 (schiff-base intermediate with substrate; via pyruvic acid) is an active-site residue. A Pyruvic acid (Ser) modification is found at S25. Residue T57 participates in substrate binding. The active-site Proton donor is the Y58. A substrate-binding site is contributed by 73 to 75; it reads GAA.

This sequence belongs to the PanD family. Heterooctamer of four alpha and four beta subunits. It depends on pyruvate as a cofactor. Is synthesized initially as an inactive proenzyme, which is activated by self-cleavage at a specific serine bond to produce a beta-subunit with a hydroxyl group at its C-terminus and an alpha-subunit with a pyruvoyl group at its N-terminus.

It is found in the cytoplasm. It catalyses the reaction L-aspartate + H(+) = beta-alanine + CO2. It functions in the pathway cofactor biosynthesis; (R)-pantothenate biosynthesis; beta-alanine from L-aspartate: step 1/1. Its function is as follows. Catalyzes the pyruvoyl-dependent decarboxylation of aspartate to produce beta-alanine. In Carboxydothermus hydrogenoformans (strain ATCC BAA-161 / DSM 6008 / Z-2901), this protein is Aspartate 1-decarboxylase.